The chain runs to 327 residues: COP9 signalosome complex subunit 5 (327 aa).

The MPN domain maps to 52-189 (IKISALALLK…LGAFRTYPKG (138 aa)). 3 residues coordinate Zn(2+): H135, H137, and D148. The JAMM motif motif lies at 135-148 (HSHPGYGCWLSGID). A phosphoserine mark is found at S300 and S302. A Phosphothreonine modification is found at T303.

Belongs to the peptidase M67A family. CSN5 subfamily. Component of the CSN complex, probably composed of CSN1b, alien/CSN2, CSN3, CSN4, CSN5, CSN6, CSN7 and CSN8. Interacts directly with CSN2. Also exists as monomeric form. Interacts via its MPN domain with Trc8. Requires a divalent metal cation as cofactor. In terms of tissue distribution, expressed in the optic lobe neuropil.

It localises to the cytoplasm. The protein resides in the nucleus. Its function is as follows. Probable protease subunit of the COP9 signalosome complex (CSN), a complex involved in various cellular and developmental processes. The CSN complex is an essential regulator of the ubiquitin (Ubl) conjugation pathway by mediating the deneddylation of the cullin subunits of the SCF-type E3 ligase complexes, leading to decrease the Ubl ligase activity of SCF. In the complex, it probably acts as the catalytic center that mediates the cleavage of Nedd8 from cullins. It however has no metalloprotease activity by itself and requires the other subunits of the CSN complex. The CSN complex plays an essential role in oogenesis and embryogenesis and is required for proper photoreceptor R cell differentiation and promote lamina glial cell migration or axon targeting. It also promotes Ubl-dependent degradation of cyclin E (CycE) during early oogenesis. Also involved in regulation of axis formation by checkpoint-dependent, translational control of Gurken. The chain is COP9 signalosome complex subunit 5 (CSN5) from Drosophila melanogaster (Fruit fly).